Consider the following 209-residue polypeptide: Zinc finger SWIM domain-containing protein sws1 (209 aa).

Residues 1–30 (MQQGHFTSNSYHSKTLNSSSLPVSSKFSHT) are compositionally biased toward polar residues. The segment at 1-33 (MQQGHFTSNSYHSKTLNSSSLPVSSKFSHTNDP) is disordered. The SWIM-type zinc-finger motif lies at 143-203 (TTIDLKYWYC…HILAASILRA (61 aa)).

Interacts with rdl1, rlp1 and srs2.

It localises to the cytoplasm. The protein resides in the nucleus. Its subcellular location is the nucleoplasm. Its function is as follows. Involved in early stages of the homologous recombination repair (HRR) pathway of double-stranded DNA breaks arising during DNA replication or induced by DNA-damaging agents. The protein is Zinc finger SWIM domain-containing protein sws1 (sws1) of Schizosaccharomyces pombe (strain 972 / ATCC 24843) (Fission yeast).